We begin with the raw amino-acid sequence, 227 residues long: MPPLLNALQLRLQHQFAEPALLQRAVTHRSFSADNNERLEFLGDSVLNLAISSLLYQRLSSMPEGDLSRVRANLVKEGTLHQIALRLQLPDLLRLGEGESKSGGKQRPSILADAVEALIGAVYLDAGYAAGEKVVHHLFEGVDINPHMRAAEKDAKTALQEWLQGRRMKLPQYEVVATTGAAHRQTFEVACAIAELQLQARGTGASRRAAEQTAATAMLELLKARHA.

One can recognise an RNase III domain in the interval 5–127 (LNALQLRLQH…LIGAVYLDAG (123 aa)). Position 40 (Glu-40) interacts with Mg(2+). The active site involves Asp-44. 2 residues coordinate Mg(2+): Asp-113 and Glu-116. Glu-116 is a catalytic residue. The region spanning 154 to 224 (DAKTALQEWL…ATAMLELLKA (71 aa)) is the DRBM domain.

It belongs to the ribonuclease III family. As to quaternary structure, homodimer. The cofactor is Mg(2+).

It is found in the cytoplasm. It carries out the reaction Endonucleolytic cleavage to 5'-phosphomonoester.. Digests double-stranded RNA. Involved in the processing of primary rRNA transcript to yield the immediate precursors to the large and small rRNAs (23S and 16S). Processes some mRNAs, and tRNAs when they are encoded in the rRNA operon. Processes pre-crRNA and tracrRNA of type II CRISPR loci if present in the organism. The chain is Ribonuclease 3 from Delftia acidovorans (strain DSM 14801 / SPH-1).